The primary structure comprises 455 residues: Adenylyltransferase and sulfurtransferase MOCS3 (455 aa).

ATP-binding positions include Gly90, Asp111, 118–122 (SNLAR), Lys135, and 179–180 (DN). The interaction with NFS1 stretch occupies residues 156–236 (AQALTPATAL…RPPPAETVTS (81 aa)). Zn(2+) is bound by residues Cys220 and Cys223. Cys237 acts as the Glycyl thioester intermediate; for adenylyltransferase activity in catalysis. Cys295 and Cys298 together coordinate Zn(2+). An intrachain disulfide couples Cys314 to Cys322. One can recognise a Rhodanese domain in the interval 345–453 (SRSPHLLLDV…WAAKIDGTFP (109 aa)). Cys410 serves as the catalytic Cysteine persulfide intermediate; for sulfurtransferase activity. Cys410 carries the post-translational modification Cysteine persulfide.

The protein in the N-terminal section; belongs to the HesA/MoeB/ThiF family. UBA4 subfamily. Interacts with NFS1. The cofactor is Zn(2+).

It is found in the cytoplasm. Its subcellular location is the cytosol. The enzyme catalyses [molybdopterin-synthase sulfur-carrier protein]-C-terminal Gly-Gly + ATP + H(+) = [molybdopterin-synthase sulfur-carrier protein]-C-terminal Gly-Gly-AMP + diphosphate. The catalysed reaction is [molybdopterin-synthase sulfur-carrier protein]-C-terminal Gly-Gly-AMP + S-sulfanyl-L-cysteinyl-[cysteine desulfurase] + AH2 = [molybdopterin-synthase sulfur-carrier protein]-C-terminal-Gly-aminoethanethioate + L-cysteinyl-[cysteine desulfurase] + A + AMP + 2 H(+). It participates in tRNA modification; 5-methoxycarbonylmethyl-2-thiouridine-tRNA biosynthesis. Its pathway is cofactor biosynthesis; molybdopterin biosynthesis. In terms of biological role, plays a central role in 2-thiolation of mcm(5)S(2)U at tRNA wobble positions of cytosolic tRNA(Lys), tRNA(Glu) and tRNA(Gln). Also essential during biosynthesis of the molybdenum cofactor. Acts by mediating the C-terminal thiocarboxylation of sulfur carriers URM1 and MOCS2A. Its N-terminus first activates URM1 and MOCS2A as acyl-adenylates (-COAMP), then the persulfide sulfur on the catalytic cysteine is transferred to URM1 and MOCS2A to form thiocarboxylation (-COSH) of their C-terminus. The reaction probably involves hydrogen sulfide that is generated from the persulfide intermediate and that acts as a nucleophile towards URM1 and MOCS2A. Subsequently, a transient disulfide bond is formed. Does not use thiosulfate as sulfur donor; NFS1 acting as a sulfur donor for thiocarboxylation reactions. In Bos taurus (Bovine), this protein is Adenylyltransferase and sulfurtransferase MOCS3.